Reading from the N-terminus, the 303-residue chain is D-alanine--D-alanine ligase (303 aa).

The ATP-grasp domain occupies 104–300; it reads KLLWNAVGLP…FEKLVERVLE (197 aa). Residue 132-187 coordinates ATP; that stretch reads IAKLSLPVFVKPSSEGSSVGVFKVKTKEELLPAITAALEFDTIVLVEEFLTGAEYS. Asp-254, Glu-267, and Asn-269 together coordinate Mg(2+).

It belongs to the D-alanine--D-alanine ligase family. It depends on Mg(2+) as a cofactor. Mn(2+) is required as a cofactor.

Its subcellular location is the cytoplasm. It carries out the reaction 2 D-alanine + ATP = D-alanyl-D-alanine + ADP + phosphate + H(+). It participates in cell wall biogenesis; peptidoglycan biosynthesis. Its function is as follows. Cell wall formation. The sequence is that of D-alanine--D-alanine ligase from Haemophilus ducreyi (strain 35000HP / ATCC 700724).